A 147-amino-acid polypeptide reads, in one-letter code: Lysozyme C-1 (147 aa).

Residues M1–G18 form the signal peptide. Positions K19–L147 constitute a C-type lysozyme domain. Intrachain disulfides connect C24-C145, C48-C133, C83-C99, and C95-C113. Catalysis depends on residues E53 and D71.

Belongs to the glycosyl hydrolase 22 family. Monomer. Stomach-specific.

It catalyses the reaction Hydrolysis of (1-&gt;4)-beta-linkages between N-acetylmuramic acid and N-acetyl-D-glucosamine residues in a peptidoglycan and between N-acetyl-D-glucosamine residues in chitodextrins.. In terms of biological role, lysozymes have primarily a bacteriolytic function; those in tissues and body fluids are associated with the monocyte-macrophage system and enhance the activity of immunoagents. The polypeptide is Lysozyme C-1 (LYZ1) (Bos taurus (Bovine)).